A 593-amino-acid chain; its full sequence is Proline--tRNA ligase (593 aa).

The protein belongs to the class-II aminoacyl-tRNA synthetase family. ProS type 1 subfamily. As to quaternary structure, homodimer.

The protein resides in the cytoplasm. It carries out the reaction tRNA(Pro) + L-proline + ATP = L-prolyl-tRNA(Pro) + AMP + diphosphate. In terms of biological role, catalyzes the attachment of proline to tRNA(Pro) in a two-step reaction: proline is first activated by ATP to form Pro-AMP and then transferred to the acceptor end of tRNA(Pro). As ProRS can inadvertently accommodate and process non-cognate amino acids such as alanine and cysteine, to avoid such errors it has two additional distinct editing activities against alanine. One activity is designated as 'pretransfer' editing and involves the tRNA(Pro)-independent hydrolysis of activated Ala-AMP. The other activity is designated 'posttransfer' editing and involves deacylation of mischarged Ala-tRNA(Pro). The misacylated Cys-tRNA(Pro) is not edited by ProRS. This chain is Proline--tRNA ligase, found in Parasynechococcus marenigrum (strain WH8102).